We begin with the raw amino-acid sequence, 1367 residues long: MYNSQQQNIIKINKQDTDGRLQLFIVDAKRTLRNSSIELESSQIYIDVTKRLIDIASLFCKQEEIQYESFAEELLSILNSTQFKILGKCRELVIKLLTIIAKYARVNQLLGIESKDRSPSSSINKNNGFDQLYDFELNRIDENNNNNNNNNNNNNNNNNKNKTISPTHQTIQATIPSPKLQPFLDHDDKDDKEIIDIVSNKDKDQLNGVDDVDLSNTSGISCKEIFEKNPINFQKSHYRCLSYSPKLLEQQLQQKLVNQQIKLKNGKPSPIKRPSPPLPPPQQQQKEQQKEQKEQQKEQQKEQQKEQQKEQEQKQQEPQKYVKFEIQKSPPSNLLPPLPISSSNISNEISKQQQQQQQQQQQQQQQQQQQQQQQQQQQQQQIAQPPPPQSITSPQTISANNNILTTPLSSQPTQSLETPSTIKPPLLSRRVSDIIYSKNETNLNIKEPIHSKDIIPTPLETNVGGGGGEITKKVVGSEENLLSSSSEEETLSTSEEHDEYTTSTSGEDEEEDEDDDNIYNTNHYEISERKLKNKRPFKKTHVHHSLSANSPLSRKPYESPVFLLDPRLNDLKTSSDEYILKRPLVRSKSFSPNKEEEQIKKEPYRKLARSFSEIPSVKLIEDHNDDSQMAMCRICEEPIHSSLLEDHSKICAMANEEDMKAMNVDDHLRAVAKILLTRSNDIPHEKRKMIIELREIALFAVENGIKENLKMIHIMNDIIKNFDPKDDNRELAIKIQSLISDKVNALKRADDVINSSPRIFRTNSPRILKSPREEELSQTPLGGRLRSDSDPVHQTQIEYKPKGVPTISDFEFIKPITKGGYGKVFLAKKIRTGDIYAIKRLKKSDMIKKNQLDHVKVERNILAYTSNPFVVKMYYSFQTKEYYYLVMEYLQGGDCFSLLQMLGSMDENMAKMIIAETVLALEYLHSHGIVHRDVKPDNLLIDKKGHIKLTDFGLSKVGLLDRQTVVPPSYFSPTLSGKNNQSSSSSSVSNIGGSNTIGSNISSTNNNNNNNNTTGATMVGGHVINTETPIPSNTAIPAKKEKKLLSLAQSKSLFSASSSPSIPSLNLLNSDKPISPMMMGVKGFIPPPPINQQPISNIPTTTTTTTTTTTGQQSQQQSQQQQQTTPPLPPHNIHRKLSCVGTPDYLAPEILLGIGHGASADWFSLGVILYEFLCGVSPFNGSSVQETFQNILQRNISWPEDMSPEARDLIDKLLALDPRQRLGFNGAEEIKSHPFFKSINWKTILTQEPYFKPKIENLQDTSYFDPRKEIYKVSDDFAESCKPFVQNQNQNKESSTILTTSPPSTSSTTATATATTSNLDSITINQNTNANFDDFLYVNFQSLLELNKNYLAEAKPFNSNHRRRNST.

4 disordered regions span residues 140–164 (IDEN…NKTI), 264–429 (KNGK…LLSR), 456–556 (PTPL…SRKP), and 771–792 (PREE…SDPV). Positions 143–162 (NNNNNNNNNNNNNNNNNKNK) are enriched in low complexity. Over residues 271–282 (IKRPSPPLPPPQ) the composition is skewed to pro residues. Over residues 287-326 (EQQKEQKEQQKEQQKEQQKEQQKEQEQKQQEPQKYVKFEI) the composition is skewed to basic and acidic residues. Residues 340-381 (ISSSNISNEISKQQQQQQQQQQQQQQQQQQQQQQQQQQQQQQ) show a composition bias toward low complexity. Over residues 399–421 (ANNNILTTPLSSQPTQSLETPST) the composition is skewed to polar residues. Over residues 506–517 (GEDEEEDEDDDN) the composition is skewed to acidic residues. The span at 531–544 (LKNKRPFKKTHVHH) shows a compositional bias: basic residues. Residues 810–1236 (FEFIKPITKG…AEEIKSHPFF (427 aa)) form the Protein kinase domain. Residues 816–824 (ITKGGYGKV) and Lys-839 contribute to the ATP site. The Proton acceptor role is filled by Asp-933. Disordered regions lie at residues 971–1034 (FSPT…PSNT), 1084–1134 (FIPP…HNIH), and 1288–1312 (QNQN…TATA). Residues 979-1015 (NNQSSSSSSVSNIGGSNTIGSNISSTNNNNNNNNTTG) show a composition bias toward low complexity. A compositionally biased stretch (polar residues) spans 1025-1034 (NTETPIPSNT). Low complexity-rich tracts occupy residues 1092 to 1125 (QQPI…QQTT) and 1294 to 1312 (SSTI…TATA). The AGC-kinase C-terminal domain occupies 1237-1347 (KSINWKTILT…VNFQSLLELN (111 aa)).

It belongs to the protein kinase superfamily. AGC Ser/Thr protein kinase family.

The catalysed reaction is L-seryl-[protein] + ATP = O-phospho-L-seryl-[protein] + ADP + H(+). It carries out the reaction L-threonyl-[protein] + ATP = O-phospho-L-threonyl-[protein] + ADP + H(+). The chain is Probable serine/threonine-protein kinase pkgA (pkgA) from Dictyostelium discoideum (Social amoeba).